A 306-amino-acid polypeptide reads, in one-letter code: CRISPR-associated endonuclease Cas1 (306 aa).

Mn(2+)-binding residues include Glu143, His210, and Asp223.

It belongs to the CRISPR-associated endonuclease Cas1 family. In terms of assembly, homodimer, forms a heterotetramer with a Cas2 homodimer. Requires Mg(2+) as cofactor. The cofactor is Mn(2+).

CRISPR (clustered regularly interspaced short palindromic repeat), is an adaptive immune system that provides protection against mobile genetic elements (viruses, transposable elements and conjugative plasmids). CRISPR clusters contain spacers, sequences complementary to antecedent mobile elements, and target invading nucleic acids. CRISPR clusters are transcribed and processed into CRISPR RNA (crRNA). Acts as a dsDNA endonuclease. Involved in the integration of spacer DNA into the CRISPR cassette. This Geobacter sulfurreducens (strain ATCC 51573 / DSM 12127 / PCA) protein is CRISPR-associated endonuclease Cas1.